Reading from the N-terminus, the 122-residue chain is Holo-[acyl-carrier-protein] synthase (122 aa).

Mg(2+) contacts are provided by D9 and E58.

Belongs to the P-Pant transferase superfamily. AcpS family. Requires Mg(2+) as cofactor.

It is found in the cytoplasm. The enzyme catalyses apo-[ACP] + CoA = holo-[ACP] + adenosine 3',5'-bisphosphate + H(+). Its function is as follows. Transfers the 4'-phosphopantetheine moiety from coenzyme A to a Ser of acyl-carrier-protein. The protein is Holo-[acyl-carrier-protein] synthase of Chlamydia pneumoniae (Chlamydophila pneumoniae).